Here is a 214-residue protein sequence, read N- to C-terminus: Avenin (214 aa).

An N-terminal signal peptide occupies residues 1–28 (MKIFFFLALLALVVSATFAQYAESDGSY). The interval 180–214 (RGQESGVFTPKFTQTSFQPYPEGEDESSLINKASE) is disordered.

Its function is as follows. Seed storage protein. The protein is Avenin of Avena sativa (Oat).